A 65-amino-acid chain; its full sequence is Large ribosomal subunit protein bL31 (65 aa).

Zn(2+) contacts are provided by Cys16, Cys18, Cys36, and Cys39.

The protein belongs to the bacterial ribosomal protein bL31 family. Type A subfamily. Part of the 50S ribosomal subunit. Zn(2+) is required as a cofactor.

In terms of biological role, binds the 23S rRNA. The sequence is that of Large ribosomal subunit protein bL31 from Brevibacillus brevis (strain 47 / JCM 6285 / NBRC 100599).